A 155-amino-acid polypeptide reads, in one-letter code: Ribosome maturation factor RimP (155 aa).

It belongs to the RimP family.

Its subcellular location is the cytoplasm. Required for maturation of 30S ribosomal subunits. This chain is Ribosome maturation factor RimP, found in Listeria monocytogenes serotype 4a (strain HCC23).